A 62-amino-acid chain; its full sequence is Frontoxin III (62 aa).

4 disulfides stabilise this stretch: Cys3–Cys24, Cys17–Cys41, Cys43–Cys54, and Cys55–Cys60.

As to expression, expressed by the venom gland.

It is found in the secreted. In terms of biological role, binds to muscle nicotinic acetylcholine receptor (nAChR) and inhibit acetylcholine from binding to the receptor, thereby impairing neuromuscular transmission. The polypeptide is Frontoxin III (Micrurus frontalis (Coral snake)).